The chain runs to 59 residues: Inner kinetochore subunit fta6 (59 aa).

Component of the inner kinetochore constitutive centromere-associated network (CCAN) (also known as central kinetochore Sim4 complex in fission yeast), which is composed of at least cnl2, cnp3, cnp20, fta1, fta2, fta3, fta4, fta6, fta7, mal2, mhf1, mhf2, mis6, mis15, mis17, sim4 and wip1.

The protein localises to the nucleus. It localises to the chromosome. Its subcellular location is the centromere. The protein resides in the kinetochore. It is found in the cytoplasm. The protein localises to the cytoskeleton. It localises to the microtubule organizing center. Its subcellular location is the spindle pole body. Component of the kinetochore, a multiprotein complex that assembles on centromeric DNA and attaches chromosomes to spindle microtubules, mediating chromosome segregation and sister chromatid segregation during meiosis and mitosis. Component of the inner kinetochore constitutive centromere-associated network (CCAN), which serves as a structural platform for outer kinetochore assembly. The protein is Inner kinetochore subunit fta6 (fta6) of Schizosaccharomyces pombe (strain 972 / ATCC 24843) (Fission yeast).